The sequence spans 294 residues: Bifunctional protein FolD (294 aa).

NADP(+) is bound by residues 166–168 (GRS), S191, and I232.

The protein belongs to the tetrahydrofolate dehydrogenase/cyclohydrolase family. As to quaternary structure, homodimer.

It catalyses the reaction (6R)-5,10-methylene-5,6,7,8-tetrahydrofolate + NADP(+) = (6R)-5,10-methenyltetrahydrofolate + NADPH. The catalysed reaction is (6R)-5,10-methenyltetrahydrofolate + H2O = (6R)-10-formyltetrahydrofolate + H(+). It functions in the pathway one-carbon metabolism; tetrahydrofolate interconversion. Its function is as follows. Catalyzes the oxidation of 5,10-methylenetetrahydrofolate to 5,10-methenyltetrahydrofolate and then the hydrolysis of 5,10-methenyltetrahydrofolate to 10-formyltetrahydrofolate. In Afipia carboxidovorans (strain ATCC 49405 / DSM 1227 / KCTC 32145 / OM5) (Oligotropha carboxidovorans), this protein is Bifunctional protein FolD.